A 154-amino-acid chain; its full sequence is Interleukin-2 (154 aa).

Positions Met1–Ser20 are cleaved as a signal peptide. An O-linked (GalNAc...) threonine glycan is attached at Thr23. Cys78 and Cys126 are oxidised to a cystine.

The protein belongs to the IL-2 family.

The protein localises to the secreted. Cytokine produced by activated CD4-positive helper T-cells and to a lesser extend activated CD8-positive T-cells and natural killer (NK) cells that plays pivotal roles in the immune response and tolerance. Binds to a receptor complex composed of either the high-affinity trimeric IL-2R (IL2RA/CD25, IL2RB/CD122 and IL2RG/CD132) or the low-affinity dimeric IL-2R (IL2RB and IL2RG). Interaction with the receptor leads to oligomerization and conformation changes in the IL-2R subunits resulting in downstream signaling starting with phosphorylation of JAK1 and JAK3. In turn, JAK1 and JAK3 phosphorylate the receptor to form a docking site leading to the phosphorylation of several substrates including STAT5. This process leads to activation of several pathways including STAT, phosphoinositide-3-kinase/PI3K and mitogen-activated protein kinase/MAPK pathways. Functions as a T-cell growth factor and can increase NK-cell cytolytic activity as well. Promotes strong proliferation of activated B-cells and subsequently immunoglobulin production. Plays a pivotal role in regulating the adaptive immune system by controlling the survival and proliferation of regulatory T-cells, which are required for the maintenance of immune tolerance. Moreover, participates in the differentiation and homeostasis of effector T-cell subsets, including Th1, Th2, Th17 as well as memory CD8-positive T-cells. In Saimiri sciureus (Common squirrel monkey), this protein is Interleukin-2 (IL2).